The sequence spans 732 residues: MERGGGGSGTGSRPEGTARGTSLPGKIAEPGAVRTSQPNYRPQGMEGFLKSDERQRLAKERREEREKCLAAREQQILEKQKRARLQYEKQMEERWRKLEEQRQREDQKRAAVEEKRKQKLREEEERLEAMMRRSLERTQQLELKKKYSWGAPLAIGPGGHDACDKLSTSTMSLPKPTEPPMNKRLSSSTVAISYSPDRVFHVCPRLAPLGPLNPSYKSSPTRNIEKKKATSTSTSGAGDVGKEALSGGEASLVEKVKRGQRTATSLPVVNFGSPLRRCEFSGGIPKRPSSPVISKTATKAYPQSPKTTKPPYPGSPVKYRLPALSGQDMPKRKAEKEKSNKEREGTLAQQAAGPQGEEALEKHVVDKHASEKHAAAAGGKAENSAALGKPTAGTTDAGEAAKILAEKRRQARLQKEQEEQERLEKEEQDRLEREELKRKAEEERLRLEEEARKQEEERKRQEEEKKKQEGEEKRKAGEEAKRKAEEELLLKEKQEQEKQEKAMIEKQKEAAETKAREVAEQMRLEREQIMLQIEQERLERKKRIDEIMKRTRKSDVSPQVKKEDPKVGVQPAVCVEKKTKLVVPNKMEINGLNTCQEVNGVDHAAPETYPQDIFSNGLKPAGGLIHLDALDGKSNSLDDSTEEVQSMDVSPVSKEELISIPEFSPVSEMIPGVSLDQNGTGNARALQDLLDFTGPPTFPKRSSENLSLDDCNKNLIEGFNSPGQETPLNTFC.

N-acetylmethionine is present on Met-1. Positions 1-10 (MERGGGGSGT) are enriched in gly residues. Disordered stretches follow at residues 1–64 (MERG…RREE), 95–123 (WRKL…LREE), 157–186 (PGGH…KRLS), 210–244 (GPLN…GKEA), and 279–509 (EFSG…KQKE). A compositionally biased stretch (basic and acidic residues) spans 49-64 (LKSDERQRLAKERREE). Residues 51-146 (SDERQRLAKE…RTQQLELKKK (96 aa)) are a coiled coil. Basic and acidic residues predominate over residues 329 to 345 (MPKRKAEKEKSNKEREG). Over residues 347-357 (LAQQAAGPQGE) the composition is skewed to low complexity. Residues 359-374 (ALEKHVVDKHASEKHA) show a composition bias toward basic and acidic residues. A compositionally biased stretch (low complexity) spans 375 to 386 (AAAGGKAENSAA). Basic and acidic residues predominate over residues 404-509 (LAEKRRQARL…EKAMIEKQKE (106 aa)).

The protein belongs to the MAP7 family. Interacts (via N-terminus) with microtubules; facilitates microtubule stabilization. Interacts with kinesin-1 family members, KIF5A, KIF5B and KIF5C.

It is found in the cytoplasm. It localises to the cytoskeleton. The protein resides in the microtubule organizing center. The protein localises to the centrosome. Its subcellular location is the midbody. It is found in the cell projection. It localises to the neuron projection. The protein resides in the axon. Microtubule-stabilizing protein that plays a role in the control of cell motility and neurite outgrowth via direct binding to the microtubule. Acts as a critical cofactor for kinesin transport. In the proximal axon, regulates kinesin-1 family members, KIF5A, KIF5B and KIF5C recruitment to microtubules and contributes to kinesin-1-mediated transport in the axons. The protein is MAP7 domain-containing protein 2 (MAP7D2) of Homo sapiens (Human).